The sequence spans 112 residues: Peptidyl-tRNA hydrolase (112 aa).

Belongs to the PTH2 family.

It localises to the cytoplasm. It carries out the reaction an N-acyl-L-alpha-aminoacyl-tRNA + H2O = an N-acyl-L-amino acid + a tRNA + H(+). The natural substrate for this enzyme may be peptidyl-tRNAs which drop off the ribosome during protein synthesis. This chain is Peptidyl-tRNA hydrolase, found in Haloquadratum walsbyi (strain DSM 16790 / HBSQ001).